The primary structure comprises 278 residues: MGKEKWCYINSGQCSPAFNMALDECLLNWQSEKKMPPTIRFYEWEVPTLTVGYFQRVEKDINMDVVNEKKYGFVRRQTGGRGVLHDKELTYSVIVSEDHPNMPKTVTEAYRVISQGLLDGFKALGLEAYYAVPKTEADRENLKNPRSGVCFDAPSWYEIVVEGRKIAGSAQTRQKGVILQHGSIPLEIDLDELYDLFLFPNERVKERMKSMFASKAVAINELTDRTFTIEQLIKAFEVGFEKGLDVELVPYELTEEQLHEVQTLAKEKYESKEWNYKK.

The BPL/LPL catalytic domain maps to 33–248 (KKMPPTIRFY…GFEKGLDVEL (216 aa)). The active-site Acyl-thioester intermediate is Cys150.

The protein belongs to the octanoyltransferase LipM family. In terms of assembly, monomer.

It carries out the reaction octanoyl-[ACP] + L-lysyl-[protein] = N(6)-octanoyl-L-lysyl-[protein] + holo-[ACP] + H(+). It participates in protein modification; protein lipoylation via endogenous pathway; protein N(6)-(lipoyl)lysine from octanoyl-[acyl-carrier-protein]. Catalyzes the transfer of endogenously produced octanoic acid from octanoyl-acyl-carrier-protein onto the lipoyl domain of GcvH, an intermediate carrier during protein lipoylation. This is Octanoyltransferase LipM from Bacillus anthracis.